We begin with the raw amino-acid sequence, 511 residues long: Probable endopeptidase p60 (511 aa).

An N-terminal signal peptide occupies residues 1–27 (MNMKKATIVSAAGIAVTAFAAPSVVSA). Residues 28–71 (NTVVVASGDTLWGIASKTGTTVDQLKQLNKLDSDRIVPGQKLTI) enclose the LysM 1 domain. In terms of domain architecture, SH3b spans 78 to 142 (KVEKSVSATW…VNGKYLSDAK (65 aa)). Residues 175–218 (STYKVKSGDTIWALSVKYGVPVQKLIEWNNLSSSSIYVGQTIAV) enclose the LysM 2 domain. 2 stretches are compositionally biased toward low complexity: residues 229-257 (TVKQ…QAKP) and 264-282 (KPAV…AKPA). The disordered stretch occupies residues 229–291 (TVKQAAPAKV…AVEQKASTPA (63 aa)). The region spanning 297-341 (ATYKVQNGDSLGKIASLFKVSVADLTNWNNLNATITIYAGQELSV) is the LysM 3 domain. Low complexity-rich tracts occupy residues 347 to 362 (KPKP…SKPA) and 372 to 390 (TNTT…NTSQ). A disordered region spans residues 347–390 (KPKPAAPAKPAVSKPATSTPAKVTPTNTTNNSTPTTNVNNNTSQ). The NlpC/P60 domain occupies 393 to 511 (SASFSALYAE…GQYLVGFGRV (119 aa)). Cys-423 serves as the catalytic Nucleophile. Catalysis depends on His-473, which acts as the Proton acceptor. Asp-485 is a catalytic residue.

The protein belongs to the peptidase C40 family.

This major extracellular protein may be involved in the invasion of non-professional phagocytic cells by Listeria. The polypeptide is Probable endopeptidase p60 (iap) (Listeria grayi (Listeria murrayi)).